The sequence spans 105 residues: Thioredoxin (105 aa).

The Thioredoxin domain occupies 2–105 (VKQIESKSAF…KLEATINELL (104 aa)). Lysine 3 is subject to N6-acetyllysine. Lysine 8 carries the N6-succinyllysine modification. Residues cysteine 32 and cysteine 35 each act as nucleophile in the active site. Cysteine 32 and cysteine 35 are oxidised to a cystine. An N6-acetyllysine modification is found at lysine 39. 2 positions are modified to S-nitrosocysteine: cysteine 62 and cysteine 69. Cysteine 73 carries the post-translational modification S-nitrosocysteine; alternate. At lysine 94 the chain carries N6-acetyllysine; alternate. Lysine 94 is subject to N6-succinyllysine; alternate.

Belongs to the thioredoxin family. Homodimer; disulfide-linked. Interacts with TXNIP through the redox-active site. Interacts with MAP3K5 and CASP3. Interacts with APEX1; the interaction stimulates the FOS/JUN AP-1 DNA-binding activity in a redox-dependent manner. In terms of processing, in the fully reduced protein, both Cys-69 and Cys-73 are nitrosylated in response to nitric oxide (NO). When two disulfide bonds are present in the protein, only Cys-73 is nitrosylated. Cys-73 can serve as donor for nitrosylation of target proteins.

Its subcellular location is the nucleus. The protein localises to the cytoplasm. It localises to the secreted. Its function is as follows. Participates in various redox reactions through the reversible oxidation of its active center dithiol to a disulfide and catalyzes dithiol-disulfide exchange reactions. Plays a role in the reversible S-nitrosylation of cysteine residues in target proteins, and thereby contributes to the response to intracellular nitric oxide. Nitrosylates the active site Cys of CASP3 in response to nitric oxide (NO), and thereby inhibits caspase-3 activity. Induces the FOS/JUN AP-1 DNA binding activity in ionizing radiation (IR) cells through its oxidation/reduction status and stimulates AP-1 transcriptional activity. The polypeptide is Thioredoxin (TXN) (Oryctolagus cuniculus (Rabbit)).